The chain runs to 663 residues: Sodium/potassium/calcium exchanger 1 (663 aa).

Residues 32 to 128 (SPSAIPALLT…DLFSVEERRQ (97 aa)) are Extracellular-facing. N-linked (GlcNAc...) asparagine glycans are attached at residues Asn59, Asn66, and Asn100. The helical transmembrane segment at 129–149 (GWVVLHIFGMMYVFVALAIVC) threads the bilayer. Over 150–173 (DEYFVPALGVITEKLQISEDVAGA) the chain is Cytoplasmic. An Alpha-1 repeat occupies 170–210 (VAGATFMAAGGSAPELFTSLIGVFISHSNVGIGTIVGSAVF). The chain crosses the membrane as a helical span at residues 174-194 (TFMAAGGSAPELFTSLIGVFI). Topologically, residues 195–200 (SHSNVG) are extracellular. The helical transmembrane segment at 201 to 221 (IGTIVGSAVFNILFVIGTCAL) threads the bilayer. Topologically, residues 222 to 228 (FSREILH) are cytoplasmic. The helical transmembrane segment at 229–253 (LTWWPLFRDISFYIVDLLMLILFFL) threads the bilayer. Over 254–259 (DSVIDW) the chain is Extracellular. Residues 260–276 (WESLLLLTAYATYVFTM) traverse the membrane as a helical segment. Over 277 to 471 (KHNVSLEQWV…SLEWPETRKK (195 aa)) the chain is Cytoplasmic. Disordered regions lie at residues 308–343 (KSSVAVAEDGTKPADGKKLQPTTALQRGTSSASLHN) and 384–465 (LTGQ…SLEW). Basic and acidic residues predominate over residues 316-325 (DGTKPADGKK). Composition is skewed to polar residues over residues 327 to 343 (QPTTALQRGTSSASLHN) and 399 to 412 (ASQNTVQVTPASDS). Ser337 bears the Phosphoserine mark. Positions 413-423 (EPSKDKQKEDT) are enriched in basic and acidic residues. Positions 434–461 (DNSEDSSSDSEDDSDDDSTDDEENDEPL) are enriched in acidic residues. Residues 472-492 (QAIYLFLFPIVFPLWSTIPDV) form a helical membrane-spanning segment. Topologically, residues 493–499 (RNPDSKK) are extracellular. Residues 500 to 520 (FFVITFFGSIIWIAAFSYLMV) form a helical membrane-spanning segment. Residues 521–535 (WWAHQVGETIGISEE) are Cytoplasmic-facing. Residues 536 to 556 (IMGLTILAAGTSIPDLITSVI) traverse the membrane as a helical segment. An Alpha-2 repeat occupies 543–574 (AAGTSIPDLITSVIVARKGLGDMAVSSSVGSN). Residues 557-574 (VARKGLGDMAVSSSVGSN) lie on the Extracellular side of the membrane. A helical transmembrane segment spans residues 575-595 (IFDITVGLPVPWFLYSVFNGF). Residues 596 to 604 (SPVAVSSNG) lie on the Cytoplasmic side of the membrane. Residues 605–625 (LFCAIVLLFLMLLFVIISIAL) form a helical membrane-spanning segment. Residues 626–632 (CKWKMNK) are Extracellular-facing. The chain crosses the membrane as a helical span at residues 633–653 (ILGVTMFALYFVFLIISVMLE). Topologically, residues 654–663 (DRIISCPVSV) are cytoplasmic.

This sequence belongs to the Ca(2+):cation antiporter (CaCA) (TC 2.A.19) family. SLC24A subfamily. The uncleaved signal sequence is required for efficient membrane targeting and proper membrane integration and topology. As to expression, retinal rods. Localizes to the inner segment of rod photoreceptors.

The protein localises to the cell membrane. It carries out the reaction Ca(2+)(out) + K(+)(out) + 4 Na(+)(in) = Ca(2+)(in) + K(+)(in) + 4 Na(+)(out). In terms of biological role, calcium, potassium:sodium antiporter that transports 1 Ca(2+) and 1 K(+) in exchange for 4 Na(+). Critical component of the visual transduction cascade, controlling the calcium concentration of outer segments during light and darkness. Light causes a rapid lowering of cytosolic free calcium in the outer segment of both retinal rod and cone photoreceptors and the light-induced lowering of calcium is caused by extrusion via this protein which plays a key role in the process of light adaptation. The polypeptide is Sodium/potassium/calcium exchanger 1 (SLC24A1) (Gallus gallus (Chicken)).